The following is a 769-amino-acid chain: 5-methyltetrahydropteroyltriglutamate--homocysteine methyltransferase (769 aa).

Residues 18 to 21 (RELK) and Lys127 contribute to the 5-methyltetrahydropteroyltri-L-glutamate site. L-homocysteine contacts are provided by residues 447–449 (IGS) and Glu500. Residues 447–449 (IGS) and Glu500 contribute to the L-methionine site. 5-methyltetrahydropteroyltri-L-glutamate contacts are provided by residues 531–532 (RC) and Trp577. Position 615 (Asp615) interacts with L-homocysteine. Residue Asp615 coordinates L-methionine. 5-methyltetrahydropteroyltri-L-glutamate is bound at residue Glu621. Zn(2+) contacts are provided by His657, Cys659, and Glu681. His710 acts as the Proton donor in catalysis. Cys742 provides a ligand contact to Zn(2+).

This sequence belongs to the vitamin-B12 independent methionine synthase family. It depends on Zn(2+) as a cofactor.

The catalysed reaction is 5-methyltetrahydropteroyltri-L-glutamate + L-homocysteine = tetrahydropteroyltri-L-glutamate + L-methionine. The protein operates within amino-acid biosynthesis; L-methionine biosynthesis via de novo pathway; L-methionine from L-homocysteine (MetE route): step 1/1. Catalyzes the transfer of a methyl group from 5-methyltetrahydrofolate to homocysteine resulting in methionine formation. The polypeptide is 5-methyltetrahydropteroyltriglutamate--homocysteine methyltransferase (Chelativorans sp. (strain BNC1)).